Here is a 317-residue protein sequence, read N- to C-terminus: MHISVLLEEAVDALNIQKGGIYVDGTYGRGGHSRLILSRLDKSGQLIAFDKDPAAISEARSILDERFQAVHSSYAGMYTALQSLGINRVDGILLDLGVSSIQLDEASRGFSFRHDGPLDMRMDSSRGKTAAEWLTMASETELKEIIRTYGEERYAGQIASAIVMEQARQPISTTLRLAEIVAAVVRKRGHRDDRQHPATRTFQAIRIHLNQELEELSMTLPQCVELLNTGGRLVVISFHSLEDRIVKRFMRMQTGTDTLPRRLPIREEESRLHNQQKLRIIGKKIRPGSDEVSANPRARSAVMRVAEKLETRNAISR.

Residues 30–32 (GGH), Asp-50, Tyr-78, Asp-95, and Gln-102 each bind S-adenosyl-L-methionine.

It belongs to the methyltransferase superfamily. RsmH family.

It localises to the cytoplasm. It carries out the reaction cytidine(1402) in 16S rRNA + S-adenosyl-L-methionine = N(4)-methylcytidine(1402) in 16S rRNA + S-adenosyl-L-homocysteine + H(+). Functionally, specifically methylates the N4 position of cytidine in position 1402 (C1402) of 16S rRNA. This Nitrosomonas eutropha (strain DSM 101675 / C91 / Nm57) protein is Ribosomal RNA small subunit methyltransferase H.